The sequence spans 249 residues: CDP-diacylglycerol pyrophosphatase (249 aa).

The chain crosses the membrane as a helical span at residues 5 to 25 (GYFLLAVIVIVAAAGVGYWKF).

This sequence belongs to the Cdh family.

It is found in the cell inner membrane. It carries out the reaction a CDP-1,2-diacyl-sn-glycerol + H2O = a 1,2-diacyl-sn-glycero-3-phosphate + CMP + 2 H(+). It participates in phospholipid metabolism; CDP-diacylglycerol degradation; phosphatidate from CDP-diacylglycerol: step 1/1. This is CDP-diacylglycerol pyrophosphatase from Salmonella arizonae (strain ATCC BAA-731 / CDC346-86 / RSK2980).